The following is a 95-amino-acid chain: Probable FAD-linked sulfhydryl oxidase OPG072 (95 aa).

Over 1–8 (MNPKHWGR) the chain is Intravirion. Residues 1–95 (MNPKHWGRAA…AIDVSKVKPL (95 aa)) form the ERV/ALR sulfhydryl oxidase domain. A helical transmembrane segment spans residues 9-25 (AAWTIIFIVLSQAGLDG). The Virion surface portion of the chain corresponds to 26–95 (NIEACKRKLY…AIDVSKVKPL (70 aa)). A disulfide bridge connects residues Cys-43 and Cys-46.

It belongs to the orthopoxvirus OPG072 family. As to quaternary structure, interacts with OPG128; this interaction involves formation of a transient disulfide-bonded intermediate, allowing disulfide bond transfer. The cofactor is FAD.

Its subcellular location is the virion membrane. It localises to the host cytoplasm. It catalyses the reaction 2 R'C(R)SH + O2 = R'C(R)S-S(R)CR' + H2O2. Functionally, FAD-dependent sulfhydryl oxidase that catalyzes disulfide bond formation. The complete pathway for formation of disulfide bonds in intracellular virion membrane proteins sequentially involves thiol-disulfide transfer between OPG072, OPG128 and OPG088. The protein is Probable FAD-linked sulfhydryl oxidase OPG072 (OPG072) of Variola virus (isolate Human/India/Ind3/1967) (VARV).